Reading from the N-terminus, the 398-residue chain is Succinyl-diaminopimelate desuccinylase (398 aa).

Zn(2+) is bound at residue His73. Residue Asp75 is part of the active site. Asp106 is a Zn(2+) binding site. Glu140 acts as the Proton acceptor in catalysis. Residues Glu141, Glu169, and His366 each contribute to the Zn(2+) site.

The protein belongs to the peptidase M20A family. DapE subfamily. As to quaternary structure, homodimer. Zn(2+) serves as cofactor. Requires Co(2+) as cofactor.

It catalyses the reaction N-succinyl-(2S,6S)-2,6-diaminopimelate + H2O = (2S,6S)-2,6-diaminopimelate + succinate. It participates in amino-acid biosynthesis; L-lysine biosynthesis via DAP pathway; LL-2,6-diaminopimelate from (S)-tetrahydrodipicolinate (succinylase route): step 3/3. In terms of biological role, catalyzes the hydrolysis of N-succinyl-L,L-diaminopimelic acid (SDAP), forming succinate and LL-2,6-diaminopimelate (DAP), an intermediate involved in the bacterial biosynthesis of lysine and meso-diaminopimelic acid, an essential component of bacterial cell walls. The polypeptide is Succinyl-diaminopimelate desuccinylase (Agrobacterium fabrum (strain C58 / ATCC 33970) (Agrobacterium tumefaciens (strain C58))).